Reading from the N-terminus, the 159-residue chain is Serine-protein kinase RsbW (159 aa).

The protein belongs to the anti-sigma-factor family.

It carries out the reaction L-seryl-[protein] + ATP = O-phospho-L-seryl-[protein] + ADP + H(+). The enzyme catalyses L-threonyl-[protein] + ATP = O-phospho-L-threonyl-[protein] + ADP + H(+). Negative regulator of sigma-B activity. Phosphorylates and inactivates its specific antagonist protein, RsbV. Upon phosphorylation of RsbV, RsbW is released and binds to sigma-B, thereby blocking its ability to form an RNA polymerase holoenzyme (E-sigma-B). The sequence is that of Serine-protein kinase RsbW from Staphylococcus aureus.